Here is a 119-residue protein sequence, read N- to C-terminus: Ribonuclease P protein component (119 aa).

It belongs to the RnpA family. Consists of a catalytic RNA component (M1 or rnpB) and a protein subunit.

The enzyme catalyses Endonucleolytic cleavage of RNA, removing 5'-extranucleotides from tRNA precursor.. In terms of biological role, RNaseP catalyzes the removal of the 5'-leader sequence from pre-tRNA to produce the mature 5'-terminus. It can also cleave other RNA substrates such as 4.5S RNA. The protein component plays an auxiliary but essential role in vivo by binding to the 5'-leader sequence and broadening the substrate specificity of the ribozyme. In Escherichia coli O6:H1 (strain CFT073 / ATCC 700928 / UPEC), this protein is Ribonuclease P protein component.